The following is a 310-amino-acid chain: Zinc finger protein-like 1 (310 aa).

The B box-type; degenerate zinc finger occupies 1 to 43 (MGLCKCPKRKVTNLFCFEHRVNVCEHCLVANHAKCIVQSYLQW). Residues 1-266 (MGLCKCPKRK…RPLTLLQRAG (266 aa)) are Cytoplasmic-facing. The segment at 53-101 (CRLCNIPLASRETTRLVCYDLFHWACLNERAAQLPRNTAPAGYQCPSCN) adopts an RING-type; degenerate zinc-finger fold. Residues 145-231 (PEPLNTSDFS…RTPGLHGDCD (87 aa)) form a disordered region. Polar residues predominate over residues 148-165 (LNTSDFSDWSSFNASSTP). Residues 213–224 (KVYDTRDDDRTP) show a composition bias toward basic and acidic residues. Residues 267–287 (LLLLLGLLGFLALLALMSRLG) form a helical membrane-spanning segment. The Lumenal portion of the chain corresponds to 288–310 (RAAADSDPNLDPLMNPHIRVGPS).

It belongs to the ZFPL1 family. As to quaternary structure, interacts with GOLGA2/GM130. Post-translationally, phosphorylated. As to expression, expressed strongly in the exocrine pancreas.

Its subcellular location is the golgi apparatus. The protein localises to the cis-Golgi network membrane. In terms of biological role, required for cis-Golgi integrity and efficient ER to Golgi transport. Involved in the maintenance of the integrity of the cis-Golgi, possibly via its interaction with GOLGA2/GM130. The protein is Zinc finger protein-like 1 (ZFPL1) of Homo sapiens (Human).